A 143-amino-acid polypeptide reads, in one-letter code: Adrenodoxin, mitochondrial (143 aa).

Residues 1-19 (CSAVAVRTLRPLSLSARAA) constitute a mitochondrion transit peptide. The 105-residue stretch at 26–130 (ITVHFINRDG…NMTVRVPEAV (105 aa)) folds into the 2Fe-2S ferredoxin-type domain. [2Fe-2S] cluster is bound by residues Cys-65, Cys-71, Cys-74, and Cys-111.

This sequence belongs to the adrenodoxin/putidaredoxin family. [2Fe-2S] cluster serves as cofactor.

It localises to the mitochondrion matrix. Essential for the synthesis of various steroid hormones. Participates in the reduction of mitochondrial cytochrome P450 for steroidogenesis. Transfers electrons from adrenodoxin reductase to CYP11A1, a cytochrome P450 that catalyzes cholesterol side-chain cleavage. Does not form a ternary complex with adrenodoxin reductase and CYP11A1 but shuttles between the two enzymes to transfer electrons. This chain is Adrenodoxin, mitochondrial (FDX1), found in Gallus gallus (Chicken).